The primary structure comprises 1368 residues: DNA-directed RNA polymerase subunit beta (1368 aa).

Belongs to the RNA polymerase beta chain family. The RNAP catalytic core consists of 2 alpha, 1 beta, 1 beta' and 1 omega subunit. When a sigma factor is associated with the core the holoenzyme is formed, which can initiate transcription.

The enzyme catalyses RNA(n) + a ribonucleoside 5'-triphosphate = RNA(n+1) + diphosphate. In terms of biological role, DNA-dependent RNA polymerase catalyzes the transcription of DNA into RNA using the four ribonucleoside triphosphates as substrates. The protein is DNA-directed RNA polymerase subunit beta of Burkholderia cenocepacia (strain ATCC BAA-245 / DSM 16553 / LMG 16656 / NCTC 13227 / J2315 / CF5610) (Burkholderia cepacia (strain J2315)).